The following is a 293-amino-acid chain: Protease HtpX (293 aa).

2 helical membrane-spanning segments follow: residues 4–24 (IALF…VLSL) and 34–54 (GLMI…LLMS). A Zn(2+)-binding site is contributed by His139. Glu140 is an active-site residue. Position 143 (His143) interacts with Zn(2+). The next 2 helical transmembrane spans lie at 158–178 (IVNT…AGFL) and 193–213 (MVYF…ASII). Position 222 (Glu222) interacts with Zn(2+).

It belongs to the peptidase M48B family. Zn(2+) serves as cofactor.

Its subcellular location is the cell inner membrane. This Yersinia enterocolitica serotype O:8 / biotype 1B (strain NCTC 13174 / 8081) protein is Protease HtpX.